The following is a 150-amino-acid chain: Phosphopantetheine adenylyltransferase (150 aa).

Position 10 (S10) interacts with substrate. ATP is bound by residues 10–11 and H18; that span reads SF. Residues K42, T74, and R88 each coordinate substrate. Residues 89-91, E99, and 124-130 each bind ATP; these read GLR and LAYISSS.

It belongs to the bacterial CoaD family. In terms of assembly, homohexamer. Mg(2+) serves as cofactor.

The protein resides in the cytoplasm. The catalysed reaction is (R)-4'-phosphopantetheine + ATP + H(+) = 3'-dephospho-CoA + diphosphate. It participates in cofactor biosynthesis; coenzyme A biosynthesis; CoA from (R)-pantothenate: step 4/5. Its function is as follows. Reversibly transfers an adenylyl group from ATP to 4'-phosphopantetheine, yielding dephospho-CoA (dPCoA) and pyrophosphate. In Cytophaga hutchinsonii (strain ATCC 33406 / DSM 1761 / CIP 103989 / NBRC 15051 / NCIMB 9469 / D465), this protein is Phosphopantetheine adenylyltransferase.